A 429-amino-acid chain; its full sequence is Enolase (429 aa).

Residue Gln-163 coordinates (2R)-2-phosphoglycerate. The active-site Proton donor is Glu-205. Asp-242, Glu-287, and Asp-314 together coordinate Mg(2+). Residues Lys-339, Arg-368, Ser-369, and Lys-390 each coordinate (2R)-2-phosphoglycerate. Residue Lys-339 is the Proton acceptor of the active site.

Belongs to the enolase family. It depends on Mg(2+) as a cofactor.

It is found in the cytoplasm. Its subcellular location is the secreted. It localises to the cell surface. The enzyme catalyses (2R)-2-phosphoglycerate = phosphoenolpyruvate + H2O. It participates in carbohydrate degradation; glycolysis; pyruvate from D-glyceraldehyde 3-phosphate: step 4/5. Its function is as follows. Catalyzes the reversible conversion of 2-phosphoglycerate (2-PG) into phosphoenolpyruvate (PEP). It is essential for the degradation of carbohydrates via glycolysis. This chain is Enolase, found in Cupriavidus pinatubonensis (strain JMP 134 / LMG 1197) (Cupriavidus necator (strain JMP 134)).